The following is a 173-amino-acid chain: Lithostathine-2 (173 aa).

The N-terminal stretch at 1–22 is a signal peptide; sequence MAQNNVYLILFLCLMFLSYSQG. Residues 41-171 enclose the C-type lectin domain; sequence INCPEGANAY…EAQYSFVCKF (131 aa). Disulfide bonds link cysteine 43-cysteine 54, cysteine 71-cysteine 169, and cysteine 144-cysteine 161.

As to expression, expressed only in regenerating islets and normal exocrine pancreas, but not in normal pancreatic islets. Expressed strongly in pancreas, weakly in liver, but not at all in gall bladder.

The protein resides in the secreted. Functionally, might act as an inhibitor of spontaneous calcium carbonate precipitation. The protein is Lithostathine-2 (Reg2) of Mus musculus (Mouse).